A 309-amino-acid chain; its full sequence is Calponin-2 (309 aa).

S2 bears the N-acetylserine mark. An N6-acetyllysine mark is found at K8 and K25. Residues 28-132 (PQKEAELRSW…SLLALAGKAK (105 aa)) enclose the Calponin-homology (CH) domain. S138 carries the phosphoserine modification. 3 Calponin-like repeats span residues 166–191 (IGLQ…RHLY), 206–231 (ISLQ…RHIY), and 245–269 (MSLQ…RQIY). The segment at 273–309 (YCPQGPAADGAPAAAGDGPGPGEPSECPPYYQEEAGY) is disordered. Low complexity predominate over residues 277 to 288 (GPAADGAPAAAG).

The protein belongs to the calponin family.

Thin filament-associated protein that is implicated in the regulation and modulation of smooth muscle contraction. It is capable of binding to actin, calmodulin and tropomyosin. The interaction of calponin with actin inhibits the actomyosin Mg-ATPase activity. The chain is Calponin-2 (CNN2) from Bos taurus (Bovine).